The following is a 391-amino-acid chain: DNA-directed RNA polymerase I subunit RPA43 (391 aa).

Disordered regions lie at residues 1–27 (MANW…SGGS) and 220–391 (QKQV…KKSK). Basic residues predominate over residues 288–299 (GRHKEKKKKKKR). The stretch at 289–353 (RHKEKKKKKK…RDKQQDSAEI (65 aa)) forms a coiled coil. A compositionally biased stretch (polar residues) spans 312–323 (MNNNSLQETALD). Basic residues predominate over residues 336–345 (KEKKKKKKRD).

This sequence belongs to the eukaryotic RPA43 RNA polymerase subunit family. As to quaternary structure, component of the RNA polymerase I (Pol I) complex consisting of at least 13 subunits.

It is found in the nucleus. The protein resides in the nucleolus. DNA-dependent RNA polymerase catalyzes the transcription of DNA into RNA using the four ribonucleoside triphosphates as substrates. Component of RNA polymerase I which synthesizes ribosomal RNA precursors. May be involved in recruitment of Pol I to rDNA promoters. This is DNA-directed RNA polymerase I subunit RPA43 from Danio rerio (Zebrafish).